A 69-amino-acid chain; its full sequence is Cytochrome c oxidase subunit 8A, mitochondrial (69 aa).

Residues 1-25 constitute a mitochondrion transit peptide; sequence MSVLTPLLLRGLTGSARRLPVPCAR. An SIFI-degron motif is present at residues 2–19; that stretch reads SVLTPLLLRGLTGSARRL. Residues 26-36 lie on the Mitochondrial matrix side of the membrane; the sequence is VHSKPPREQLG. The helical transmembrane segment at 37-60 threads the bilayer; it reads TMDIAIGLTSCFVCFLLPSGWVLS. The Mitochondrial intermembrane segment spans residues 61–69; that stretch reads HLENYKKRE.

The protein belongs to the cytochrome c oxidase VIII family. As to quaternary structure, component of the cytochrome c oxidase (complex IV, CIV), a multisubunit enzyme composed of 14 subunits. The complex is composed of a catalytic core of 3 subunits MT-CO1, MT-CO2 and MT-CO3, encoded in the mitochondrial DNA, and 11 supernumerary subunits COX4I, COX5A, COX5B, COX6A, COX6B, COX6C, COX7A, COX7B, COX7C, COX8 and NDUFA4, which are encoded in the nuclear genome. The complex exists as a monomer or a dimer and forms supercomplexes (SCs) in the inner mitochondrial membrane with NADH-ubiquinone oxidoreductase (complex I, CI) and ubiquinol-cytochrome c oxidoreductase (cytochrome b-c1 complex, complex III, CIII), resulting in different assemblies (supercomplex SCI(1)III(2)IV(1) and megacomplex MCI(2)III(2)IV(2)). In terms of processing, in response to mitochondrial stress, the precursor protein is ubiquitinated by the SIFI complex in the cytoplasm before mitochondrial import, leading to its degradation. Within the SIFI complex, UBR4 initiates ubiquitin chain that are further elongated or branched by KCMF1.

It localises to the mitochondrion inner membrane. Its pathway is energy metabolism; oxidative phosphorylation. Its function is as follows. Component of the cytochrome c oxidase, the last enzyme in the mitochondrial electron transport chain which drives oxidative phosphorylation. The respiratory chain contains 3 multisubunit complexes succinate dehydrogenase (complex II, CII), ubiquinol-cytochrome c oxidoreductase (cytochrome b-c1 complex, complex III, CIII) and cytochrome c oxidase (complex IV, CIV), that cooperate to transfer electrons derived from NADH and succinate to molecular oxygen, creating an electrochemical gradient over the inner membrane that drives transmembrane transport and the ATP synthase. Cytochrome c oxidase is the component of the respiratory chain that catalyzes the reduction of oxygen to water. Electrons originating from reduced cytochrome c in the intermembrane space (IMS) are transferred via the dinuclear copper A center (CU(A)) of subunit 2 and heme A of subunit 1 to the active site in subunit 1, a binuclear center (BNC) formed by heme A3 and copper B (CU(B)). The BNC reduces molecular oxygen to 2 water molecules using 4 electrons from cytochrome c in the IMS and 4 protons from the mitochondrial matrix. The sequence is that of Cytochrome c oxidase subunit 8A, mitochondrial (COX8A) from Otolemur crassicaudatus (Brown greater galago).